A 156-amino-acid chain; its full sequence is MPKMNVESFNLDHTIVVAPFVRLAGKMEGANGDVIHKYDIRFKQPNKEHMDMPGLHSLEHLMAENIRNHSDKVVDISPMGCQTGFYVSFINHDDYEDVLNIIEATIKDVLNATEVPACNEVQCGWAASHSLEGAKEIAQTFLDKKAEWHDIYGEAQ.

3 residues coordinate Fe cation: H56, H60, and C123.

This sequence belongs to the LuxS family. Homodimer. Requires Fe cation as cofactor.

The catalysed reaction is S-(5-deoxy-D-ribos-5-yl)-L-homocysteine = (S)-4,5-dihydroxypentane-2,3-dione + L-homocysteine. Its function is as follows. Involved in the synthesis of autoinducer 2 (AI-2) which is secreted by bacteria and is used to communicate both the cell density and the metabolic potential of the environment. The regulation of gene expression in response to changes in cell density is called quorum sensing. Catalyzes the transformation of S-ribosylhomocysteine (RHC) to homocysteine (HC) and 4,5-dihydroxy-2,3-pentadione (DPD). This Staphylococcus saprophyticus subsp. saprophyticus (strain ATCC 15305 / DSM 20229 / NCIMB 8711 / NCTC 7292 / S-41) protein is S-ribosylhomocysteine lyase.